The primary structure comprises 1189 residues: Lysine-specific demethylase hairless (1189 aa).

5 disordered regions span residues 1 to 40, 236 to 257, 349 to 377, 414 to 480, and 505 to 552; these read MEST…HHGP, HLQR…EMGA, EGGA…SHHT, AGSP…LQDP, and GEGG…RLST. The span at 239–254 shows a compositional bias: basic and acidic residues; sequence RAGEAERPSLHQRDGE. Residues 457–469 are compositionally biased toward basic and acidic residues; sequence KDVDSGQHDEQKG. The short motif at 566–570 is the LXXLL motif 1 element; the sequence is LCRLL. Residues 600–625 form a C6-type zinc finger; sequence CSRCHHGLFNTHWRCPRCSHRLCVAC. The tract at residues 702–750 is disordered; it reads GDAGQQKESTQKTPPTPQPSCNGDTHRTKSIKEETPDSAETPAEDRAGR. A compositionally biased stretch (basic and acidic residues) spans 725–736; the sequence is DTHRTKSIKEET. The LXXLL motif 2 signature appears at 758–762; it reads LCELL. In terms of domain architecture, JmjC spans 946–1157; sequence DTSRVENLAA…LSAQLCHQGP (212 aa). Fe cation-binding residues include cysteine 1007, glutamate 1009, and histidine 1125.

Fe(2+) is required as a cofactor. In terms of tissue distribution, strongest expression of isoforms 1 and 2 is seen in the small intestine, weaker expression in brain and colon, and trace expression is found in liver, pancreas, spleen, thymus, stomach, salivary gland, appendix and trachea. Isoform 1 is always the most abundant. Isoform 1 is exclusively expressed at low levels in kidney and testis. Isoform 2 is exclusively expressed at high levels in the skin.

The protein localises to the nucleus. The enzyme catalyses N(6),N(6)-dimethyl-L-lysyl(9)-[histone H3] + 2 2-oxoglutarate + 2 O2 = L-lysyl(9)-[histone H3] + 2 formaldehyde + 2 succinate + 2 CO2. In terms of biological role, histone demethylase that specifically demethylates both mono- and dimethylated 'Lys-9' of histone H3. May act as a transcription regulator controlling hair biology (via targeting of collagens), neural activity, and cell cycle. This Homo sapiens (Human) protein is Lysine-specific demethylase hairless (HR).